The chain runs to 177 residues: Transcription antitermination protein NusB (177 aa).

The disordered stretch occupies residues 1 to 35 (MTDSTHPTPSARPPRQPRTGTTGTGARKAGSKSGR). The span at 17–28 (PRTGTTGTGARK) shows a compositional bias: low complexity.

The protein belongs to the NusB family.

In terms of biological role, involved in transcription antitermination. Required for transcription of ribosomal RNA (rRNA) genes. Binds specifically to the boxA antiterminator sequence of the ribosomal RNA (rrn) operons. This chain is Transcription antitermination protein NusB, found in Acidovorax sp. (strain JS42).